The following is a 98-amino-acid chain: MEAVERIENPYGIRLRIFLQPKASRDQIVGLHDSELKIAITAPPVDGAANAHLLKYLSKLFKVPKSSIVLEKGELQRHNKQLFVPEPKLIPKEIEALL.

The protein belongs to the UPF0235 family.

This Actinobacillus pleuropneumoniae serotype 3 (strain JL03) protein is UPF0235 protein APJL_1398.